The primary structure comprises 360 residues: Phospho-N-acetylmuramoyl-pentapeptide-transferase (360 aa).

The Periplasmic portion of the chain corresponds to 1–25 (MLVWLAEHLVKYYSGFNVFSYLTFR). The chain crosses the membrane as a helical span at residues 26–46 (AIVSLLTALFISLWMGPRMIA). The Cytoplasmic portion of the chain corresponds to 47 to 71 (RLQKLSFGQVVRNDGPESHFSKRGT). A helical membrane pass occupies residues 72–92 (PTMGGIMILTAIVISVLLWAY). Pro-93 is a topological domain (periplasmic). A helical membrane pass occupies residues 94–114 (SNPYVWCVLVVLIGYGIIGFV). Topologically, residues 115–131 (DDYRKVVRKDTKGLIAR) are cytoplasmic. A helical transmembrane segment spans residues 132–152 (WKYFWMSVIALGVAFALYLVG). Topologically, residues 153–167 (KDTPVTQLVVPFFKD) are periplasmic. A helical transmembrane segment spans residues 168–188 (VMPQLGLFYILLSYFVIVGTG). At 189 to 198 (NAVNLTDGLD) the chain is on the cytoplasmic side. Residues 199-219 (GLAIMPTVFVAAGFALVAWAT) traverse the membrane as a helical segment. At 220–235 (GNMNFANYLHIPYLRH) the chain is on the periplasmic side. The helical transmembrane segment at 236-256 (AGELVIVCTAIVGAGLGFLWF) threads the bilayer. The Cytoplasmic segment spans residues 257–262 (NTYPAQ). A helical membrane pass occupies residues 263–283 (VFMGDVGSLALGGALGIIAVL). Over 284 to 287 (LRQE) the chain is Periplasmic. Residues 288 to 308 (FLLVIMGGVFVVETLSVILQV) form a helical membrane-spanning segment. At 309 to 337 (GSFKLRGQRIFRMAPIHHHYELKGWPEPR) the chain is on the cytoplasmic side. Residues 338–358 (VIVRFWIISLMLVLIGLATLK) form a helical membrane-spanning segment. Over 359–360 (VR) the chain is Periplasmic.

It belongs to the glycosyltransferase 4 family. MraY subfamily. Mg(2+) serves as cofactor.

The protein resides in the cell inner membrane. It catalyses the reaction UDP-N-acetyl-alpha-D-muramoyl-L-alanyl-gamma-D-glutamyl-meso-2,6-diaminopimeloyl-D-alanyl-D-alanine + di-trans,octa-cis-undecaprenyl phosphate = di-trans,octa-cis-undecaprenyl diphospho-N-acetyl-alpha-D-muramoyl-L-alanyl-D-glutamyl-meso-2,6-diaminopimeloyl-D-alanyl-D-alanine + UMP. The protein operates within cell wall biogenesis; peptidoglycan biosynthesis. Its function is as follows. Catalyzes the initial step of the lipid cycle reactions in the biosynthesis of the cell wall peptidoglycan: transfers peptidoglycan precursor phospho-MurNAc-pentapeptide from UDP-MurNAc-pentapeptide onto the lipid carrier undecaprenyl phosphate, yielding undecaprenyl-pyrophosphoryl-MurNAc-pentapeptide, known as lipid I. This is Phospho-N-acetylmuramoyl-pentapeptide-transferase from Salmonella paratyphi C (strain RKS4594).